A 303-amino-acid polypeptide reads, in one-letter code: Methionyl-tRNA formyltransferase (303 aa).

A (6S)-5,6,7,8-tetrahydrofolate-binding site is contributed by 110 to 113 (SLLP).

The protein belongs to the Fmt family.

The catalysed reaction is L-methionyl-tRNA(fMet) + (6R)-10-formyltetrahydrofolate = N-formyl-L-methionyl-tRNA(fMet) + (6S)-5,6,7,8-tetrahydrofolate + H(+). Functionally, attaches a formyl group to the free amino group of methionyl-tRNA(fMet). The formyl group appears to play a dual role in the initiator identity of N-formylmethionyl-tRNA by promoting its recognition by IF2 and preventing the misappropriation of this tRNA by the elongation apparatus. The chain is Methionyl-tRNA formyltransferase from Ehrlichia ruminantium (strain Gardel).